Consider the following 264-residue polypeptide: MSTAAARPGRRFTVGRSEDATHPDTIRAAISEFLATAIFVFAAEGSILSLGKLYQDMSTPGGLVAVSLAHALALAVAVAVAVNISGGHVNPAITFGALLGGRLSLIRALFYWLAQLLGAVVATLLLRLTTGGMRPPGFALASGVGDWHAVLLEATMTFGLMYAYYATVIDPKRGHVGTIAPLAVGFLLGANMLAGGPFDGAGMNPARVFGPALVGWRWRHHWVYWLGPFVGAGLAGLLYEYLVIPSADAAPHGGAHQPLAPEDY.

Transmembrane regions (helical) follow at residues 28–48 and 62–82; these read AAISEFLATAIFVFAAEGSIL and GLVAVSLAHALALAVAVAVAV. Residues 90–92 carry the NPA 1 motif; sequence NPA. 3 consecutive transmembrane segments (helical) span residues 105–125, 149–169, and 176–196; these read LIRALFYWLAQLLGAVVATLL, AVLLEATMTFGLMYAYYATVI, and VGTIAPLAVGFLLGANMLAGG. An NPA 2 motif is present at residues 204 to 206; it reads NPA. The chain crosses the membrane as a helical span at residues 224–244; the sequence is YWLGPFVGAGLAGLLYEYLVI.

The protein belongs to the MIP/aquaporin (TC 1.A.8) family. TIP (TC 1.A.8.10) subfamily. In terms of tissue distribution, expressed in leaves and at lower levels in roots.

Its subcellular location is the vacuole membrane. In terms of biological role, aquaporins facilitate the transport of water and small neutral solutes across cell membranes. May be involved in transport from the vacuolar compartment to the cytoplasm. The polypeptide is Probable aquaporin TIP3-1 (TIP3-1) (Oryza sativa subsp. japonica (Rice)).